A 245-amino-acid polypeptide reads, in one-letter code: 1-(5-phosphoribosyl)-5-[(5-phosphoribosylamino)methylideneamino] imidazole-4-carboxamide isomerase (245 aa).

Aspartate 8 functions as the Proton acceptor in the catalytic mechanism. Aspartate 129 serves as the catalytic Proton donor.

Belongs to the HisA/HisF family.

It localises to the cytoplasm. It catalyses the reaction 1-(5-phospho-beta-D-ribosyl)-5-[(5-phospho-beta-D-ribosylamino)methylideneamino]imidazole-4-carboxamide = 5-[(5-phospho-1-deoxy-D-ribulos-1-ylimino)methylamino]-1-(5-phospho-beta-D-ribosyl)imidazole-4-carboxamide. It functions in the pathway amino-acid biosynthesis; L-histidine biosynthesis; L-histidine from 5-phospho-alpha-D-ribose 1-diphosphate: step 4/9. The polypeptide is 1-(5-phosphoribosyl)-5-[(5-phosphoribosylamino)methylideneamino] imidazole-4-carboxamide isomerase (Rhodopseudomonas palustris (strain BisB5)).